An 87-amino-acid chain; its full sequence is Small ribosomal subunit protein bS18 (87 aa).

Positions 1-21 are disordered; it reads MRHKPTPPKGNKSLGNALASK.

Belongs to the bacterial ribosomal protein bS18 family. In terms of assembly, part of the 30S ribosomal subunit. Forms a tight heterodimer with protein bS6.

Its function is as follows. Binds as a heterodimer with protein bS6 to the central domain of the 16S rRNA, where it helps stabilize the platform of the 30S subunit. This is Small ribosomal subunit protein bS18 from Chlorobium phaeobacteroides (strain DSM 266 / SMG 266 / 2430).